Consider the following 283-residue polypeptide: MQIHKLCIFVLFISLLSSKTISAVKFNFNRFDGTNLIFIGYAELGPATDGMSRSGALSMTRDNIPFSHGQGLYTDPIPFKSSNNTSSSVYSFKTSFTFSITPRRSNPNPGHGIAFIVVPTVAYEYDQDSTRGFLGLVNLTTNGNPNNHLFAVEFDVFQDKRFGDINDNHVGVNINSVNSKVSEKAGYWIQTRTRGKNQWLFKEVKLSSGDNYKAWIEYKNSKVIVWLAPAHLKKPKRPLIETQVDLSEVVLETMYTGFSGSMGRGVERHDIWSWSFENTAKNN.

A signal peptide spans 1-23; sequence MQIHKLCIFVLFISLLSSKTISA. Residues 24 to 277 form a legume-lectin like region; sequence VKFNFNRFDG…RHDIWSWSFE (254 aa). Asn84 and Asn138 each carry an N-linked (GlcNAc...) asparagine glycan. The residue at position 247 (Ser247) is a Phosphoserine.

The protein belongs to the leguminous lectin family.

The protein resides in the secreted. It localises to the extracellular space. It is found in the apoplast. This chain is Lectin-like protein At1g53080, found in Arabidopsis thaliana (Mouse-ear cress).